Here is a 566-residue protein sequence, read N- to C-terminus: 4-hydroxy-7-methoxy-3-oxo-3,4-dihydro-2H-1,4-benzoxazin-2-yl glucoside beta-D-glucosidase 1, chloroplastic (566 aa).

The transit peptide at 1 to 54 (MAPLLAAAMNHAAAHPGLRSHLVGPNNESFSRHHLPSSSPQSSKRRCNLSFTTR) directs the protein to the chloroplast. The disordered stretch occupies residues 17–47 (GLRSHLVGPNNESFSRHHLPSSSPQSSKRRC). A beta-D-glucoside-binding positions include Gln-92, His-196, and 244–245 (NE). The Proton donor role is filled by Glu-245. Cysteines 264 and 270 form a disulfide. Residues 325 to 361 (SFLDKQAEERSWDINLGWFLEPVVRGDYPFSMRSLAR) form a dimerization region. Tyr-387 lines the a beta-D-glucoside pocket. Dimerization regions lie at residues 394-405 (NIDISPNYSPVL) and 450-453 (KYGN). A beta-D-glucoside is bound by residues Glu-460, Trp-511, 518-519 (EW), and Tyr-527. Glu-460 acts as the Nucleophile in catalysis.

It belongs to the glycosyl hydrolase 1 family. In terms of assembly, homo- and heterodimer. In terms of tissue distribution, expressed in all seedling parts. Most abundant in the coleoptile.

It is found in the plastid. The protein resides in the chloroplast. The catalysed reaction is Hydrolysis of terminal, non-reducing beta-D-glucosyl residues with release of beta-D-glucose.. It catalyses the reaction DIMBOA beta-D-glucoside + H2O = DIMBOA + D-glucose. The enzyme catalyses DIBOA beta-D-glucoside + H2O = DIBOA + D-glucose. With respect to regulation, reversibly inhibited by micromolar concentrations of Hg(2+) or Ag(+), but irreversibly inhibited by alkylation in presence of urea. Competitive inhibition by p-nitrophenyl beta-D-thioglucoside (pNPTGlc), glucotetrazole, and para-hydroxy-S-mandelonitrile beta-glucoside (dhurrin). Functionally, is implicated in many functions such as ABA metabolism, hydrolysis of conjugated gibberellins, conversion of storage forms of cytokinins to active forms. Also acts in defense of young plant parts against pests via the production of hydroxamic acids from hydroxamic acid glucosides. Enzymatic activity is highly correlated with plant growth. The preferred substrate is DIMBOA-beta-D-glucoside. Hydrolyzes the chromogenic substrate 6-bromo-2-naphthyl-beta-D-glucoside (6BNGlc) and various artificial aryl beta-glucosides. No activity with cellobiose, arbutin, gentiobiose, linamarin or dhurrin as substrates. The protein is 4-hydroxy-7-methoxy-3-oxo-3,4-dihydro-2H-1,4-benzoxazin-2-yl glucoside beta-D-glucosidase 1, chloroplastic (GLU1) of Zea mays (Maize).